A 140-amino-acid chain; its full sequence is L-fucose mutarotase (140 aa).

The Proton donor role is filled by histidine 22. Residues aspartate 30, arginine 107, and 129 to 131 each bind substrate; that span reads YGN.

The protein belongs to the RbsD / FucU family. FucU mutarotase subfamily. Homodecamer.

The protein localises to the cytoplasm. It catalyses the reaction alpha-L-fucose = beta-L-fucose. Its pathway is carbohydrate metabolism; L-fucose metabolism. In terms of biological role, involved in the anomeric conversion of L-fucose. This Klebsiella pneumoniae subsp. pneumoniae (strain ATCC 700721 / MGH 78578) protein is L-fucose mutarotase.